Here is a 447-residue protein sequence, read N- to C-terminus: Tubulin beta chain (447 aa).

8 residues coordinate GTP: Gln-11, Glu-69, Ser-138, Gly-142, Thr-143, Gly-144, Asn-204, and Asn-226. Position 69 (Glu-69) interacts with Mg(2+). The tract at residues 424–447 (QYQDAGVDEEEEEYEEEAPLEGEE) is disordered. Residues 429–447 (GVDEEEEEYEEEAPLEGEE) show a composition bias toward acidic residues.

It belongs to the tubulin family. Dimer of alpha and beta chains. A typical microtubule is a hollow water-filled tube with an outer diameter of 25 nm and an inner diameter of 15 nM. Alpha-beta heterodimers associate head-to-tail to form protofilaments running lengthwise along the microtubule wall with the beta-tubulin subunit facing the microtubule plus end conferring a structural polarity. Microtubules usually have 13 protofilaments but different protofilament numbers can be found in some organisms and specialized cells. The cofactor is Mg(2+).

It is found in the cytoplasm. The protein localises to the cytoskeleton. Its function is as follows. Tubulin is the major constituent of microtubules, a cylinder consisting of laterally associated linear protofilaments composed of alpha- and beta-tubulin heterodimers. Microtubules grow by the addition of GTP-tubulin dimers to the microtubule end, where a stabilizing cap forms. Below the cap, tubulin dimers are in GDP-bound state, owing to GTPase activity of alpha-tubulin. The protein is Tubulin beta chain (tub-2) of Neurospora crassa (strain ATCC 24698 / 74-OR23-1A / CBS 708.71 / DSM 1257 / FGSC 987).